The primary structure comprises 442 residues: tRNA-2-methylthio-N(6)-dimethylallyladenosine synthase (442 aa).

One can recognise an MTTase N-terminal domain in the interval 5–122; sequence KKVFIKTLGC…LPEMIKQKQK (118 aa). [4Fe-4S] cluster-binding residues include Cys-14, Cys-51, Cys-85, Cys-159, Cys-163, and Cys-166. In terms of domain architecture, Radical SAM core spans 145–378; sequence KAEGAKAYVS…DLLNSNAQII (234 aa). The 63-residue stretch at 380 to 442 folds into the TRAM domain; the sequence is RQMVGTNQRI…LPNSLRGELI (63 aa).

This sequence belongs to the methylthiotransferase family. MiaB subfamily. Monomer. Requires [4Fe-4S] cluster as cofactor.

The protein resides in the cytoplasm. The enzyme catalyses N(6)-dimethylallyladenosine(37) in tRNA + (sulfur carrier)-SH + AH2 + 2 S-adenosyl-L-methionine = 2-methylsulfanyl-N(6)-dimethylallyladenosine(37) in tRNA + (sulfur carrier)-H + 5'-deoxyadenosine + L-methionine + A + S-adenosyl-L-homocysteine + 2 H(+). Its function is as follows. Catalyzes the methylthiolation of N6-(dimethylallyl)adenosine (i(6)A), leading to the formation of 2-methylthio-N6-(dimethylallyl)adenosine (ms(2)i(6)A) at position 37 in tRNAs that read codons beginning with uridine. The protein is tRNA-2-methylthio-N(6)-dimethylallyladenosine synthase of Francisella tularensis subsp. holarctica (strain FTNF002-00 / FTA).